The sequence spans 877 residues: Leucine--tRNA ligase (877 aa).

A 'HIGH' region motif is present at residues 43–53 (PYPSGRIHMGH). Residues 628-632 (KMSKS) carry the 'KMSKS' region motif. Lysine 631 is a binding site for ATP.

Belongs to the class-I aminoacyl-tRNA synthetase family.

It localises to the cytoplasm. It carries out the reaction tRNA(Leu) + L-leucine + ATP = L-leucyl-tRNA(Leu) + AMP + diphosphate. The chain is Leucine--tRNA ligase from Brucella melitensis biotype 2 (strain ATCC 23457).